The following is a 1252-amino-acid chain: Myosin-1 (1252 aa).

The tract at residues 1–27 is disordered; that stretch reads MAPSKKAGKKVTPASKKSAGQGKVAKA. The region spanning 38 to 712 is the Myosin motor domain; that stretch reads VGVSDMTLLT…TLFALETMRD (675 aa). An ATP-binding site is contributed by 128-135; it reads GESGAGKT. Ser356 is subject to Phosphoserine. An actin-binding region spans residues 403-485; that stretch reads IIGILDIFGF…PGIFAALNDA (83 aa). IQ domains follow at residues 716–736 and 737–762; these read HNMAARIQRAFRNYMRYKHEC and ARRIQRFWKNNKEGIAYAQTRDYGHQ. Residues 770–953 form the TH1 domain; the sequence is RRRFSLLSYR…TVHVASGEPP (184 aa). 2 disordered regions span residues 945–1049 and 1103–1228; these read VHVA…PETP and PPKA…PATA. Pro residues-rich tracts occupy residues 989–999 and 1028–1046; these read RSVPKPKPVAQ and RPPPAPPRNIAPPPPPAKP. The SH3 domain occupies 1046 to 1104; the sequence is PETPMYRAKFAFEGQEGEMSLKKDDVVELVEKDDNGWWLVKMDGVEGWAPNNYLELVPP. Positions 1162–1175 are enriched in polar residues; the sequence is ADTTPASSRPSSAI. Residues 1178-1193 show a composition bias toward pro residues; sequence KPPPPVAAKPKPPVIP. Positions 1194-1203 are enriched in low complexity; that stretch reads VKPSVSAKGP. Pro residues predominate over residues 1204 to 1215; the sequence is AKPPIPTAPRPP. Over residues 1216–1228 the composition is skewed to low complexity; sequence AASTSRSSKPATA.

It belongs to the TRAFAC class myosin-kinesin ATPase superfamily. Myosin family. Phosphorylation of the TEDS site (Ser-356) is required for the polarization of the actin cytoskeleton. Phosphorylation probably activates the myosin-I ATPase activity.

The protein localises to the cytoplasm. It localises to the cytoskeleton. The protein resides in the actin patch. Functionally, type-I myosin implicated in the organization of the actin cytoskeleton. Required for proper actin cytoskeleton polarization. At the cell cortex, assembles in patch-like structures together with proteins from the actin-polymerizing machinery and promotes actin assembly. Functions as actin nucleation-promoting factor (NPF) for the Arp2/3 complex. This chain is Myosin-1 (MYO1), found in Laccaria bicolor (strain S238N-H82 / ATCC MYA-4686) (Bicoloured deceiver).